The chain runs to 104 residues: Pyrimidine/purine nucleoside phosphorylase (104 aa).

It belongs to the nucleoside phosphorylase PpnP family.

The catalysed reaction is a purine D-ribonucleoside + phosphate = a purine nucleobase + alpha-D-ribose 1-phosphate. It catalyses the reaction adenosine + phosphate = alpha-D-ribose 1-phosphate + adenine. The enzyme catalyses cytidine + phosphate = cytosine + alpha-D-ribose 1-phosphate. It carries out the reaction guanosine + phosphate = alpha-D-ribose 1-phosphate + guanine. The catalysed reaction is inosine + phosphate = alpha-D-ribose 1-phosphate + hypoxanthine. It catalyses the reaction thymidine + phosphate = 2-deoxy-alpha-D-ribose 1-phosphate + thymine. The enzyme catalyses uridine + phosphate = alpha-D-ribose 1-phosphate + uracil. It carries out the reaction xanthosine + phosphate = alpha-D-ribose 1-phosphate + xanthine. Catalyzes the phosphorolysis of diverse nucleosides, yielding D-ribose 1-phosphate and the respective free bases. Can use uridine, adenosine, guanosine, cytidine, thymidine, inosine and xanthosine as substrates. Also catalyzes the reverse reactions. This Geobacter sulfurreducens (strain ATCC 51573 / DSM 12127 / PCA) protein is Pyrimidine/purine nucleoside phosphorylase.